Consider the following 341-residue polypeptide: GTPase Obg (341 aa).

One can recognise an Obg domain in the interval 1–159; that stretch reads MKFVDEALIK…RNLRLELRVL (159 aa). Positions 128 to 150 are disordered; sequence TRYKSSVNRSPRQTTPGSPGESR. Positions 129-144 are enriched in polar residues; sequence RYKSSVNRSPRQTTPG. One can recognise an OBG-type G domain in the interval 160-334; it reads ADVGLLGLPN…LCYALMQLID (175 aa). GTP is bound by residues 166 to 173, 191 to 195, 213 to 216, 283 to 286, and 315 to 317; these read GLPNAGKS, FTTLH, DIPG, NKID, and SAI. Mg(2+) is bound by residues Ser173 and Thr193.

It belongs to the TRAFAC class OBG-HflX-like GTPase superfamily. OBG GTPase family. Monomer. Requires Mg(2+) as cofactor.

It is found in the cytoplasm. An essential GTPase which binds GTP, GDP and possibly (p)ppGpp with moderate affinity, with high nucleotide exchange rates and a fairly low GTP hydrolysis rate. Plays a role in control of the cell cycle, stress response, ribosome biogenesis and in those bacteria that undergo differentiation, in morphogenesis control. The chain is GTPase Obg from Legionella pneumophila (strain Lens).